We begin with the raw amino-acid sequence, 371 residues long: tRNA/tmRNA (uracil-C(5))-methyltransferase (371 aa).

The S-adenosyl-L-methionine site is built by glutamine 194, tyrosine 223, asparagine 228, glutamate 244, and aspartate 304. The active-site Nucleophile is the cysteine 329. The active-site Proton acceptor is the glutamate 363.

Belongs to the class I-like SAM-binding methyltransferase superfamily. RNA M5U methyltransferase family. TrmA subfamily.

It catalyses the reaction uridine(54) in tRNA + S-adenosyl-L-methionine = 5-methyluridine(54) in tRNA + S-adenosyl-L-homocysteine + H(+). The enzyme catalyses uridine(341) in tmRNA + S-adenosyl-L-methionine = 5-methyluridine(341) in tmRNA + S-adenosyl-L-homocysteine + H(+). Dual-specificity methyltransferase that catalyzes the formation of 5-methyluridine at position 54 (m5U54) in all tRNAs, and that of position 341 (m5U341) in tmRNA (transfer-mRNA). This chain is tRNA/tmRNA (uracil-C(5))-methyltransferase, found in Sulfurovum sp. (strain NBC37-1).